We begin with the raw amino-acid sequence, 208 residues long: Uracil phosphoribosyltransferase (208 aa).

5-phospho-alpha-D-ribose 1-diphosphate-binding positions include Arg-78, Arg-103, and 130–138; that span reads DPMLATGGS. Uracil-binding positions include Ile-193 and 198–200; that span reads GDA. Residue Asp-199 participates in 5-phospho-alpha-D-ribose 1-diphosphate binding.

This sequence belongs to the UPRTase family. It depends on Mg(2+) as a cofactor.

It carries out the reaction UMP + diphosphate = 5-phospho-alpha-D-ribose 1-diphosphate + uracil. It functions in the pathway pyrimidine metabolism; UMP biosynthesis via salvage pathway; UMP from uracil: step 1/1. With respect to regulation, allosterically activated by GTP. In terms of biological role, catalyzes the conversion of uracil and 5-phospho-alpha-D-ribose 1-diphosphate (PRPP) to UMP and diphosphate. The chain is Uracil phosphoribosyltransferase from Trichlorobacter lovleyi (strain ATCC BAA-1151 / DSM 17278 / SZ) (Geobacter lovleyi).